A 242-amino-acid polypeptide reads, in one-letter code: Ubiquinone biosynthesis O-methyltransferase (242 aa).

Arginine 44, glycine 64, aspartate 85, and methionine 129 together coordinate S-adenosyl-L-methionine.

It belongs to the methyltransferase superfamily. UbiG/COQ3 family.

It catalyses the reaction a 3-demethylubiquinol + S-adenosyl-L-methionine = a ubiquinol + S-adenosyl-L-homocysteine + H(+). The enzyme catalyses a 3-(all-trans-polyprenyl)benzene-1,2-diol + S-adenosyl-L-methionine = a 2-methoxy-6-(all-trans-polyprenyl)phenol + S-adenosyl-L-homocysteine + H(+). It functions in the pathway cofactor biosynthesis; ubiquinone biosynthesis. Its function is as follows. O-methyltransferase that catalyzes the 2 O-methylation steps in the ubiquinone biosynthetic pathway. This chain is Ubiquinone biosynthesis O-methyltransferase, found in Citrobacter koseri (strain ATCC BAA-895 / CDC 4225-83 / SGSC4696).